The following is a 134-amino-acid chain: Holo-[acyl-carrier-protein] synthase (134 aa).

2 residues coordinate Mg(2+): Asp-8 and Glu-57.

It belongs to the P-Pant transferase superfamily. AcpS family. Requires Mg(2+) as cofactor.

It is found in the cytoplasm. It catalyses the reaction apo-[ACP] + CoA = holo-[ACP] + adenosine 3',5'-bisphosphate + H(+). In terms of biological role, transfers the 4'-phosphopantetheine moiety from coenzyme A to a Ser of acyl-carrier-protein. The sequence is that of Holo-[acyl-carrier-protein] synthase from Rhizobium johnstonii (strain DSM 114642 / LMG 32736 / 3841) (Rhizobium leguminosarum bv. viciae).